Consider the following 410-residue polypeptide: Neuroserpin (410 aa).

The N-terminal stretch at 1–16 (MYFLGLLSLLVLPSKA) is a signal peptide. 2 N-linked (GlcNAc...) asparagine glycosylation sites follow: asparagine 157 and asparagine 401.

Belongs to the serpin family. As to expression, detected in embryonic ocular vitreous fluid (at protein level). In the embryo present in retina, brain, cerebellum and spinal cord. In adult, predominantly expressed in the brain.

The protein resides in the secreted. It localises to the cytoplasmic vesicle. It is found in the secretory vesicle lumen. Its subcellular location is the perikaryon. Serine protease inhibitor that inhibits plasminogen activators and plasmin but not thrombin. May be involved in the formation or reorganization of synaptic connections as well as for synaptic plasticity in the adult nervous system. May protect neurons from cell damage by tissue-type plasminogen activator. The polypeptide is Neuroserpin (SERPINI1) (Gallus gallus (Chicken)).